The following is a 184-amino-acid chain: Holliday junction branch migration complex subunit RuvA (184 aa).

The tract at residues 1–64 (MIKAIEGVVT…EDANLLYGFL (64 aa)) is domain I. Positions 65–134 (DANEQKMFEM…IAELSDTKLI (70 aa)) are domain II. The interval 134–137 (ISDE) is flexible linker. Residues 138 to 184 (SVPSYQNEALLALEALGFKREKIVKILPDCKSENTSDLIKEALKKLG) form a domain III region.

The protein belongs to the RuvA family. In terms of assembly, homotetramer. Forms an RuvA(8)-RuvB(12)-Holliday junction (HJ) complex. HJ DNA is sandwiched between 2 RuvA tetramers; dsDNA enters through RuvA and exits via RuvB. An RuvB hexamer assembles on each DNA strand where it exits the tetramer. Each RuvB hexamer is contacted by two RuvA subunits (via domain III) on 2 adjacent RuvB subunits; this complex drives branch migration. In the full resolvosome a probable DNA-RuvA(4)-RuvB(12)-RuvC(2) complex forms which resolves the HJ.

The protein localises to the cytoplasm. Functionally, the RuvA-RuvB-RuvC complex processes Holliday junction (HJ) DNA during genetic recombination and DNA repair, while the RuvA-RuvB complex plays an important role in the rescue of blocked DNA replication forks via replication fork reversal (RFR). RuvA specifically binds to HJ cruciform DNA, conferring on it an open structure. The RuvB hexamer acts as an ATP-dependent pump, pulling dsDNA into and through the RuvAB complex. HJ branch migration allows RuvC to scan DNA until it finds its consensus sequence, where it cleaves and resolves the cruciform DNA. This is Holliday junction branch migration complex subunit RuvA from Campylobacter concisus (strain 13826).